The sequence spans 292 residues: Protease HtpX (292 aa).

The next 2 membrane-spanning stretches (helical) occupy residues 4–24 and 34–54; these read IALF…VLSL and GLMI…LLMS. H139 lines the Zn(2+) pocket. E140 is a catalytic residue. A Zn(2+)-binding site is contributed by H143. Helical transmembrane passes span 158-178 and 192-212; these read IVNT…AGFL and MIYF…ASII. E221 contacts Zn(2+).

Belongs to the peptidase M48B family. Zn(2+) serves as cofactor.

It localises to the cell inner membrane. This Serratia proteamaculans (strain 568) protein is Protease HtpX.